Here is a 303-residue protein sequence, read N- to C-terminus: ATP phosphoribosyltransferase (303 aa).

The protein belongs to the ATP phosphoribosyltransferase family. Long subfamily. The cofactor is Mg(2+).

Its subcellular location is the cytoplasm. The catalysed reaction is 1-(5-phospho-beta-D-ribosyl)-ATP + diphosphate = 5-phospho-alpha-D-ribose 1-diphosphate + ATP. It functions in the pathway amino-acid biosynthesis; L-histidine biosynthesis; L-histidine from 5-phospho-alpha-D-ribose 1-diphosphate: step 1/9. Feedback inhibited by histidine. Catalyzes the condensation of ATP and 5-phosphoribose 1-diphosphate to form N'-(5'-phosphoribosyl)-ATP (PR-ATP). Has a crucial role in the pathway because the rate of histidine biosynthesis seems to be controlled primarily by regulation of HisG enzymatic activity. This chain is ATP phosphoribosyltransferase, found in Haemophilus influenzae (strain PittEE).